The sequence spans 581 residues: NADH-quinone oxidoreductase subunit C/D (581 aa).

An NADH dehydrogenase I subunit C region spans residues 1–172; sequence MSGTDLVSEL…PLFNMTAALF (172 aa). Positions 196-581 are NADH dehydrogenase I subunit D; the sequence is ELMILNYGPH…IDYVMSDVDR (386 aa).

This sequence in the N-terminal section; belongs to the complex I 30 kDa subunit family. It in the C-terminal section; belongs to the complex I 49 kDa subunit family. In terms of assembly, NDH-1 is composed of 13 different subunits. Subunits NuoB, CD, E, F, and G constitute the peripheral sector of the complex.

It localises to the cell inner membrane. It carries out the reaction a quinone + NADH + 5 H(+)(in) = a quinol + NAD(+) + 4 H(+)(out). In terms of biological role, NDH-1 shuttles electrons from NADH, via FMN and iron-sulfur (Fe-S) centers, to quinones in the respiratory chain. The immediate electron acceptor for the enzyme in this species is believed to be ubiquinone. Couples the redox reaction to proton translocation (for every two electrons transferred, four hydrogen ions are translocated across the cytoplasmic membrane), and thus conserves the redox energy in a proton gradient. The protein is NADH-quinone oxidoreductase subunit C/D of Rhodopseudomonas palustris (strain BisB5).